Consider the following 370-residue polypeptide: DNA-directed RNA polymerase II subunit GRINL1A (370 aa).

Residues Met-1–Ser-20 form a disordered region. A coiled-coil region spans residues Asp-15–Arg-69. Residues Lys-29–Val-68 are important for transcription repressor activity. Disordered stretches follow at residues Asp-93–Gly-172, Asp-204–Pro-226, and Lys-241–Arg-283. Positions Asn-101 to Gln-131 are enriched in polar residues. Residues Arg-138 to Ser-152 are compositionally biased toward basic and acidic residues. Low complexity predominate over residues Pro-155 to Ser-170. Residues Pro-205 to Arg-214 show a composition bias toward basic and acidic residues. Residues Lys-228 to His-299 are interaction with Pol II. Polar residues predominate over residues Val-254–Cys-266. Ser-271 bears the Phosphoserine mark. The tract at residues Leu-300–Arg-315 is important for transcription repressor activity. A coiled-coil region spans residues Gln-303–Leu-328. Positions Gln-316–Met-341 are interaction with Pol II. A disordered region spans residues Lys-340–Phe-370. The span at Glu-349–Arg-358 shows a compositional bias: basic and acidic residues. Residues Asp-359–Phe-370 are compositionally biased toward acidic residues.

Belongs to the GRINL1 family. Component of the Pol II(G) complex, which contains the RNA polymerase II (Pol II) core complex subunits and POLR2M and appears to be an abundant form of Pol II. Post-translationally, dephosphorylated at Ser-271 by the PNUTS-PP1 complex, promoting RNA polymerase II transcription pause-release.

The protein resides in the nucleus. Its function is as follows. Appears to be a stable component of the Pol II(G) complex form of RNA polymerase II (Pol II). Pol II synthesizes mRNA precursors and many functional non-coding RNAs and is the central component of the basal RNA polymerase II transcription machinery. May play a role in Mediator complex-dependent regulation of transcription activation. Acts in vitro as a negative regulator of transcriptional activation; this repression is relieved by the Mediator complex, which restores Pol II(G) activator-dependent transcription to a level equivalent to that of Pol II. In Bos taurus (Bovine), this protein is DNA-directed RNA polymerase II subunit GRINL1A (POLR2M).